Reading from the N-terminus, the 66-residue chain is DNA-directed RNA polymerase subunit omega (66 aa).

This sequence belongs to the RNA polymerase subunit omega family. The RNAP catalytic core consists of 2 alpha, 1 beta, 1 beta' and 1 omega subunit. When a sigma factor is associated with the core the holoenzyme is formed, which can initiate transcription.

The enzyme catalyses RNA(n) + a ribonucleoside 5'-triphosphate = RNA(n+1) + diphosphate. In terms of biological role, promotes RNA polymerase assembly. Latches the N- and C-terminal regions of the beta' subunit thereby facilitating its interaction with the beta and alpha subunits. This is DNA-directed RNA polymerase subunit omega from Clostridium botulinum (strain Eklund 17B / Type B).